A 373-amino-acid polypeptide reads, in one-letter code: DNA replication and repair protein RecF (373 aa).

30 to 37 (GDNAQGKT) provides a ligand contact to ATP.

The protein belongs to the RecF family.

The protein resides in the cytoplasm. The RecF protein is involved in DNA metabolism; it is required for DNA replication and normal SOS inducibility. RecF binds preferentially to single-stranded, linear DNA. It also seems to bind ATP. The protein is DNA replication and repair protein RecF of Oenococcus oeni (strain ATCC BAA-331 / PSU-1).